Consider the following 365-residue polypeptide: 2-aminoethylphosphonate--pyruvate transaminase (365 aa).

At K194 the chain carries N6-(pyridoxal phosphate)lysine.

The protein belongs to the class-V pyridoxal-phosphate-dependent aminotransferase family. PhnW subfamily. In terms of assembly, homodimer. The cofactor is pyridoxal 5'-phosphate.

It carries out the reaction (2-aminoethyl)phosphonate + pyruvate = phosphonoacetaldehyde + L-alanine. Involved in phosphonate degradation. The chain is 2-aminoethylphosphonate--pyruvate transaminase from Bacillus cereus (strain ATCC 14579 / DSM 31 / CCUG 7414 / JCM 2152 / NBRC 15305 / NCIMB 9373 / NCTC 2599 / NRRL B-3711).